The chain runs to 100 residues: NADH-quinone oxidoreductase subunit K (100 aa).

3 helical membrane-spanning segments follow: residues 2 to 22 (ISLN…LFGI), 28 to 48 (ILML…GFVA), and 63 to 83 (LFII…VVIW).

Belongs to the complex I subunit 4L family. As to quaternary structure, NDH-1 is composed of 14 different subunits. Subunits NuoA, H, J, K, L, M, N constitute the membrane sector of the complex.

The protein resides in the cell inner membrane. The catalysed reaction is a quinone + NADH + 5 H(+)(in) = a quinol + NAD(+) + 4 H(+)(out). Its function is as follows. NDH-1 shuttles electrons from NADH, via FMN and iron-sulfur (Fe-S) centers, to quinones in the respiratory chain. The immediate electron acceptor for the enzyme in this species is believed to be ubiquinone. Couples the redox reaction to proton translocation (for every two electrons transferred, four hydrogen ions are translocated across the cytoplasmic membrane), and thus conserves the redox energy in a proton gradient. The polypeptide is NADH-quinone oxidoreductase subunit K (Helicobacter hepaticus (strain ATCC 51449 / 3B1)).